The primary structure comprises 284 residues: MNLIDGKALAAKMQAELKVKVDKLKEADNVPGLAVILVGEDPASQIYVRNKARQATAIGLNSSVVRLPETVSEQELLDLIEQYNQSEQWHGILVQLPLPEHISEEKVLLAIDPEKDVDGFHPMNMGRLWSGNPLMIPSTPAGIMEMFREYDVELSGKRAVVIGRSNIVGKPMAQLLMMADATVTIAHSKTENLRELTKEADVLVVAIGRDRMIKAEDVKEGAVVIDVGMNRDEDGKLHGDVDFDEVKDVASLITPVPGGVGPMTITMLMEQTVRAASRKMNENK.

NADP(+) is bound by residues 163–165 (GRS) and Ser-188.

This sequence belongs to the tetrahydrofolate dehydrogenase/cyclohydrolase family. In terms of assembly, homodimer.

It carries out the reaction (6R)-5,10-methylene-5,6,7,8-tetrahydrofolate + NADP(+) = (6R)-5,10-methenyltetrahydrofolate + NADPH. The catalysed reaction is (6R)-5,10-methenyltetrahydrofolate + H2O = (6R)-10-formyltetrahydrofolate + H(+). It participates in one-carbon metabolism; tetrahydrofolate interconversion. In terms of biological role, catalyzes the oxidation of 5,10-methylenetetrahydrofolate to 5,10-methenyltetrahydrofolate and then the hydrolysis of 5,10-methenyltetrahydrofolate to 10-formyltetrahydrofolate. The chain is Bifunctional protein FolD from Lactococcus lactis subsp. lactis (strain IL1403) (Streptococcus lactis).